We begin with the raw amino-acid sequence, 445 residues long: Potassium/proton antiporter CemA (445 aa).

A run of 4 helical transmembrane segments spans residues 44–64, 330–350, 368–388, and 405–425; these read MQVS…VNIC, ALTC…ILIL, LIII…GWKL, and FILC…KYWI.

Belongs to the CemA family.

It localises to the plastid. The protein resides in the chloroplast inner membrane. It catalyses the reaction K(+)(in) + H(+)(out) = K(+)(out) + H(+)(in). Functionally, contributes to K(+)/H(+) antiport activity by supporting proton efflux to control proton extrusion and homeostasis in chloroplasts in a light-dependent manner to modulate photosynthesis. Prevents excessive induction of non-photochemical quenching (NPQ) under continuous-light conditions. Indirectly promotes efficient inorganic carbon uptake into chloroplasts. This is Potassium/proton antiporter CemA from Pleurastrum terricola (Filamentous green alga).